Reading from the N-terminus, the 368-residue chain is Chaperone protein DnaJ (368 aa).

The J domain maps to 5–65 (DYYEVLGLTK…QKKARYDQFG (61 aa)). A CR-type zinc finger spans residues 125-207 (GKETEIEIPK…CRGEGKVQKR (83 aa)). Zn(2+) is bound by residues Cys138, Cys141, Cys155, Cys158, Cys181, Cys184, Cys195, and Cys198. CXXCXGXG motif repeat units follow at residues 138-145 (CETCHGSG), 155-162 (CSTCNGAG), 181-188 (CTTCHGTG), and 195-202 (CSTCRGEG).

The protein belongs to the DnaJ family. As to quaternary structure, homodimer. Zn(2+) serves as cofactor.

Its subcellular location is the cytoplasm. Functionally, participates actively in the response to hyperosmotic and heat shock by preventing the aggregation of stress-denatured proteins and by disaggregating proteins, also in an autonomous, DnaK-independent fashion. Unfolded proteins bind initially to DnaJ; upon interaction with the DnaJ-bound protein, DnaK hydrolyzes its bound ATP, resulting in the formation of a stable complex. GrpE releases ADP from DnaK; ATP binding to DnaK triggers the release of the substrate protein, thus completing the reaction cycle. Several rounds of ATP-dependent interactions between DnaJ, DnaK and GrpE are required for fully efficient folding. Also involved, together with DnaK and GrpE, in the DNA replication of plasmids through activation of initiation proteins. The sequence is that of Chaperone protein DnaJ from Lysinibacillus sphaericus (Bacillus sphaericus).